The chain runs to 515 residues: 2,3-bisphosphoglycerate-independent phosphoglycerate mutase (515 aa).

Asp14 and Ser64 together coordinate Mn(2+). Ser64 serves as the catalytic Phosphoserine intermediate. Substrate-binding positions include His125, Arg155–Asp156, Arg187, Arg193, Arg263–Arg266, and Lys337. Residues Asp404, His408, Asp445, His446, and His464 each coordinate Mn(2+).

Belongs to the BPG-independent phosphoglycerate mutase family. In terms of assembly, monomer. It depends on Mn(2+) as a cofactor.

It carries out the reaction (2R)-2-phosphoglycerate = (2R)-3-phosphoglycerate. The protein operates within carbohydrate degradation; glycolysis; pyruvate from D-glyceraldehyde 3-phosphate: step 3/5. Functionally, catalyzes the interconversion of 2-phosphoglycerate and 3-phosphoglycerate. The protein is 2,3-bisphosphoglycerate-independent phosphoglycerate mutase of Cronobacter sakazakii (strain ATCC BAA-894) (Enterobacter sakazakii).